Reading from the N-terminus, the 222-residue chain is Phosphate-specific transport system accessory protein PhoU homolog 1 (222 aa).

Belongs to the PhoU family. As to quaternary structure, homodimer.

Its subcellular location is the cytoplasm. Functionally, plays a role in the regulation of phosphate uptake. The chain is Phosphate-specific transport system accessory protein PhoU homolog 1 (phoU1) from Mycobacterium leprae (strain TN).